A 316-amino-acid polypeptide reads, in one-letter code: Acetyl-coenzyme A carboxylase carboxyl transferase subunit alpha (316 aa).

Residues Arg-39–Met-293 form the CoA carboxyltransferase C-terminal domain.

It belongs to the AccA family. As to quaternary structure, acetyl-CoA carboxylase is a heterohexamer composed of biotin carboxyl carrier protein (AccB), biotin carboxylase (AccC) and two subunits each of ACCase subunit alpha (AccA) and ACCase subunit beta (AccD).

It localises to the cytoplasm. It carries out the reaction N(6)-carboxybiotinyl-L-lysyl-[protein] + acetyl-CoA = N(6)-biotinyl-L-lysyl-[protein] + malonyl-CoA. The protein operates within lipid metabolism; malonyl-CoA biosynthesis; malonyl-CoA from acetyl-CoA: step 1/1. Functionally, component of the acetyl coenzyme A carboxylase (ACC) complex. First, biotin carboxylase catalyzes the carboxylation of biotin on its carrier protein (BCCP) and then the CO(2) group is transferred by the carboxyltransferase to acetyl-CoA to form malonyl-CoA. The polypeptide is Acetyl-coenzyme A carboxylase carboxyl transferase subunit alpha (Stutzerimonas stutzeri (strain A1501) (Pseudomonas stutzeri)).